Reading from the N-terminus, the 432-residue chain is MVSEQIIDISGPLKGEIEVPGDKSMTHRAIMLASLAEGTSNIYKPLLGEDCRRTMDIFRLLGVDIKEDEDKLVVNSPGYKAFKTPHQVLYTGNSGTTTRLLAGLLSGLGIESVLSGDVSIGKRPMDRVLRPLKLMDANIEGIEDNYTPLIIKPSVIKGINYQMEVASAQVKSAILFASLFSNDTTVIKELDVSRNHTETMFRHFNIPIEAERLSITTTPDAIQHIKPADFHVPGDISSAAFFIVAALITPESDVTIHNVGINPTRSGIIDIVEKMGGNIQLFNQTTGAEPTASIRIQYTPMLQPITIEGELVPKAIDELPVIALLCTQAVGTSTIKDAEELKVKETNRIDTTADMLNLLGFELQPTNDGLIIHPSEFKTNATVDSLTDHRIGMMLAVASLLSSEPVKIKQFDAVNVSFPGFLPKLKLLENEG.

3-phosphoshikimate-binding residues include Lys-23, Ser-24, and Arg-28. Lys-23 is a binding site for phosphoenolpyruvate. The phosphoenolpyruvate site is built by Gly-95 and Arg-123. 4 residues coordinate 3-phosphoshikimate: Ser-167, Gln-169, Asp-317, and Lys-344. A phosphoenolpyruvate-binding site is contributed by Gln-169. Asp-317 serves as the catalytic Proton acceptor. Residues Arg-348 and Arg-390 each coordinate phosphoenolpyruvate.

Belongs to the EPSP synthase family. Monomer.

Its subcellular location is the cytoplasm. It carries out the reaction 3-phosphoshikimate + phosphoenolpyruvate = 5-O-(1-carboxyvinyl)-3-phosphoshikimate + phosphate. Its pathway is metabolic intermediate biosynthesis; chorismate biosynthesis; chorismate from D-erythrose 4-phosphate and phosphoenolpyruvate: step 6/7. In terms of biological role, catalyzes the transfer of the enolpyruvyl moiety of phosphoenolpyruvate (PEP) to the 5-hydroxyl of shikimate-3-phosphate (S3P) to produce enolpyruvyl shikimate-3-phosphate and inorganic phosphate. The polypeptide is 3-phosphoshikimate 1-carboxyvinyltransferase (Staphylococcus aureus (strain N315)).